Consider the following 1567-residue polypeptide: Putative DEAH-box ATP-dependent helicase UM11114 (1567 aa).

Disordered regions lie at residues 1–95 (MAPR…PGSK) and 670–734 (ESSV…ETRR). The span at 10–20 (IKSSGTTSSKA) shows a compositional bias: polar residues. Low complexity-rich tracts occupy residues 39-48 (TKAAKQQQTQ) and 55-73 (AISA…AASS). Gly residues predominate over residues 74–83 (AGGGGGGGQG). Polar residues-rich tracts occupy residues 670–687 (ESSV…TPTG) and 713–726 (LQRQ…SPSY). The Helicase ATP-binding domain maps to 746–924 (LGLIRSNRVV…FGKAPCISIP (179 aa)). 759-766 (GETGCGKT) contacts ATP. Residues 871-874 (DEVH) carry the DEAH box motif. Residues 1003–1184 (VVRYVVERAE…SLFLEVKSMR (182 aa)) enclose the Helicase C-terminal domain.

This sequence belongs to the DEAD box helicase family. DEAH subfamily.

The sequence is that of Putative DEAH-box ATP-dependent helicase UM11114 from Mycosarcoma maydis (Corn smut fungus).